A 1064-amino-acid polypeptide reads, in one-letter code: Lethal(2) giant larvae protein homolog 1 (1064 aa).

WD repeat units lie at residues 38–71 (SALAFDPELRIMAIGTRSGAVKIYGAPGVEFTGL), 78–119 (VTQM…ALSF), 139–176 (VTVVLLVAASDIAALGTEGSSVFFLDVTTLTLLEGQTL), 200–234 (SLQGHLRDPTKILIGYSRGLLVIWNQASQCVDHIF), 240–272 (LESLCWGRDSSTVVSSHSDGSYAVWSVDAGSFP), 290–332 (AINK…ETLV), 340–374 (IIDFFTVHSTRPEDEFDDPQALAVLLEEELVVLDL), 396–474 (TCSA…YKLS), 518–593 (QKVA…RVLV), 602–663 (TAVT…LRQS), 723–783 (VRCL…KEVQ), 792–844 (AIAV…VSAK), 849–902 (LTAH…VHYS), and 916–939 (VFTRHGQGFYLISPSEFERFSLSA). Residue serine 663 is modified to Phosphoserine. Threonine 958 carries the post-translational modification Phosphothreonine. A disordered region spans residues 966–1010 (ESPKLSQANGTPSILLAPQSLDGSPDPAHSMGPDTPEPPEAALSP). Serine 967 and serine 985 each carry phosphoserine.

This sequence belongs to the WD repeat L(2)GL family. Associated with nonmuscle myosin II heavy chain. Interacts with PRKCI/aPKC, PARD6B/Par-6 and PARD6A. Interacts with STX4A. Interacts with RAB10 (GDP-bound form); the interaction is direct and promotes RAB10 association with membranes and activation through competition with the Rab inhibitor GDI1. Interacts with DCAF1. Post-translationally, phosphorylated at least at Ser-663 by PRKCI. Expressed in brain, kidney, and muscle but is barely seen in heart and placenta. Down-regulated or lost in all cell lines and in most of the tumor samples analyzed. Loss was associated with advanced stage of the disease.

The protein resides in the early endosome membrane. The protein localises to the golgi apparatus. Its subcellular location is the trans-Golgi network membrane. It localises to the golgi apparatus membrane. It is found in the cell projection. The protein resides in the axon. The protein localises to the cytoplasm. Its subcellular location is the cytoskeleton. In terms of biological role, cortical cytoskeleton protein found in a complex involved in maintaining cell polarity and epithelial integrity. Involved in the regulation of mitotic spindle orientation, proliferation, differentiation and tissue organization of neuroepithelial cells. Involved in axonogenesis through RAB10 activation thereby regulating vesicular membrane trafficking toward the axonal plasma membrane. In Homo sapiens (Human), this protein is Lethal(2) giant larvae protein homolog 1 (LLGL1).